A 152-amino-acid polypeptide reads, in one-letter code: Large-conductance mechanosensitive channel (152 aa).

Transmembrane regions (helical) follow at residues 26 to 46 (VLDL…VGSA), 50 to 70 (ILTP…LFIT), and 92 to 112 (IGVF…IFWL).

This sequence belongs to the MscL family. Homopentamer.

The protein localises to the cell inner membrane. In terms of biological role, channel that opens in response to stretch forces in the membrane lipid bilayer. May participate in the regulation of osmotic pressure changes within the cell. This chain is Large-conductance mechanosensitive channel, found in Gluconobacter oxydans (strain 621H) (Gluconobacter suboxydans).